Reading from the N-terminus, the 209-residue chain is Translation initiation factor IF-3 (209 aa).

This sequence belongs to the IF-3 family. Monomer.

Its subcellular location is the cytoplasm. Its function is as follows. IF-3 binds to the 30S ribosomal subunit and shifts the equilibrium between 70S ribosomes and their 50S and 30S subunits in favor of the free subunits, thus enhancing the availability of 30S subunits on which protein synthesis initiation begins. This chain is Translation initiation factor IF-3, found in Chlorobium phaeobacteroides (strain DSM 266 / SMG 266 / 2430).